The primary structure comprises 294 residues: Pantothenate synthetase 3 (294 aa).

31–38 (MGALHEGH) provides a ligand contact to ATP. The Proton donor role is filled by His38. Gln62 lines the (R)-pantoate pocket. Gln62 lines the beta-alanine pocket. 154 to 157 (GEKD) is an ATP binding site. A (R)-pantoate-binding site is contributed by Gln160. ATP is bound at residue 191-194 (LSSR).

This sequence belongs to the pantothenate synthetase family. As to quaternary structure, homodimer.

The protein resides in the cytoplasm. The catalysed reaction is (R)-pantoate + beta-alanine + ATP = (R)-pantothenate + AMP + diphosphate + H(+). It functions in the pathway cofactor biosynthesis; (R)-pantothenate biosynthesis; (R)-pantothenate from (R)-pantoate and beta-alanine: step 1/1. Functionally, catalyzes the condensation of pantoate with beta-alanine in an ATP-dependent reaction via a pantoyl-adenylate intermediate. The polypeptide is Pantothenate synthetase 3 (Frankia alni (strain DSM 45986 / CECT 9034 / ACN14a)).